The sequence spans 368 residues: Putative alcohol dehydrogenase D (368 aa).

The Zn(2+) site is built by cysteine 40, histidine 61, cysteine 91, cysteine 94, cysteine 97, cysteine 105, and cysteine 167.

Belongs to the zinc-containing alcohol dehydrogenase family. It depends on Zn(2+) as a cofactor.

It carries out the reaction a primary alcohol + NAD(+) = an aldehyde + NADH + H(+). It catalyses the reaction a secondary alcohol + NAD(+) = a ketone + NADH + H(+). Its function is as follows. Required for maintaining the appropriate mycolic acid composition and permeability of the envelope on its exposure to acidic pH. This chain is Putative alcohol dehydrogenase D (adhD), found in Mycobacterium tuberculosis (strain CDC 1551 / Oshkosh).